The sequence spans 299 residues: Protease HtpX homolog (299 aa).

2 helical membrane-spanning segments follow: residues 14–34 (ILVMAGFVFLVALIGAAVGYL) and 39–59 (ATGGVIIALVIAVIYVSIMVG). His144 provides a ligand contact to Zn(2+). The active site involves Glu145. Position 148 (His148) interacts with Zn(2+). Transmembrane regions (helical) follow at residues 159–179 (IALALTAAISLLVNFAGNFMW) and 196–216 (VFAIIGSILLIILAPLAATMV). A Zn(2+)-binding site is contributed by Glu225.

Belongs to the peptidase M48B family. Requires Zn(2+) as cofactor.

The protein resides in the cell membrane. This is Protease HtpX homolog from Limosilactobacillus fermentum (strain NBRC 3956 / LMG 18251) (Lactobacillus fermentum).